The chain runs to 384 residues: GDSL esterase/lipase ENOD8 (384 aa).

Residues 1–31 (MKFMAKIELSRHIPLVTLIVLVLCITPPIFA) form the signal peptide. Ser-46 functions as the Nucleophile in the catalytic mechanism. Residues Asn-105, Asn-191, Asn-198, Asn-276, and Asn-330 are each glycosylated (N-linked (GlcNAc...) asparagine). Catalysis depends on residues Asp-349 and His-352.

This sequence belongs to the 'GDSL' lipolytic enzyme family. As to expression, expressed in root nodules (at protein level).

It localises to the symbiosome. Functionally, has lipase and esterase activities. Probably involved in root nodule physiology. The sequence is that of GDSL esterase/lipase ENOD8 from Medicago truncatula (Barrel medic).